The primary structure comprises 562 residues: Phosphoglucomutase-1 (562 aa).

Residue M1 is modified to N-acetylmethionine. K16 carries the N6-acetyllysine modification. R23 contributes to the alpha-D-glucose 1,6-bisphosphate binding site. The residue at position 115 (T115) is a Phosphothreonine. Alpha-D-glucose 1,6-bisphosphate is bound at residue S117. S117 (phosphoserine intermediate) is an active-site residue. Mg(2+) is bound at residue S117. A phosphoserine mark is found at S117 and S134. Phosphothreonine is present on T185. Position 213 is a phosphoserine (S213). Residues D288, D290, and D292 each contribute to the Mg(2+) site. The alpha-D-glucose 1,6-bisphosphate site is built by D292 and R293. At K349 the chain carries N6-acetyllysine. Residue Y353 is modified to Phosphotyrosine. Residue T357 participates in alpha-D-glucose 1,6-bisphosphate binding. Residue S369 is modified to Phosphoserine. E376, S378, and K389 together coordinate alpha-D-glucose 1,6-bisphosphate. S378 is subject to Phosphoserine. Residue K419 is modified to N6-succinyllysine. A Phosphothreonine; by PAK1 modification is found at T467. Residues S477, S485, and S505 each carry the phosphoserine modification. At T507 the chain carries Phosphothreonine. Phosphoserine is present on residues S509 and S541.

This sequence belongs to the phosphohexose mutase family. Monomer. It depends on Mg(2+) as a cofactor. In terms of processing, phosphorylation at Thr-467 by PAK1 significantly enhances enzymatic activity.

It localises to the cytoplasm. The enzyme catalyses alpha-D-glucose 1-phosphate = alpha-D-glucose 6-phosphate. It carries out the reaction O-phospho-L-seryl-[protein] + alpha-D-glucose 1-phosphate = alpha-D-glucose 1,6-bisphosphate + L-seryl-[protein]. It catalyses the reaction alpha-D-glucose 1,6-bisphosphate + L-seryl-[protein] = O-phospho-L-seryl-[protein] + alpha-D-glucose 6-phosphate. In terms of biological role, catalyzes the reversible isomerization of alpha-D-glucose 1-phosphate to alpha-D-glucose 6-phosphate. The mechanism proceeds via the intermediate compound alpha-D-glucose 1,6-bisphosphate. This enzyme participates in both the breakdown and synthesis of glucose. The sequence is that of Phosphoglucomutase-1 (PGM1) from Bos taurus (Bovine).